We begin with the raw amino-acid sequence, 661 residues long: MSQAISLTFPDGSVRGYDAGATGRDVAESISKSLAKKAVAVAIDGTVRDLSDPVTTGRIEIITRNDDRALELIRHDAAHVMAEAVQELWPGTQVTIGPVIENGFYYDFAKNEPFTLDDLPKIEKKMKEIIARNAAFTKQVWSRDRAKQVFADKGEQYKVELVDAIPEGQDLKIYYQGDWFDLCRGPHMASTGQIGSAFKLLKVAGAYWRGDSNNPMLSRIYGTAFAEQSELDNYLHMLAEAEKRDHRRLGREMDLFHFQEEGPGVVFWHGKGWRVFQTLVAYMRRRLAGDYQEVNAPQVLDKSLWETSGHWGWYRDSMFKVTVAGDDTDDDRVFALKPMNCPGHIQIFKHGLKSYRELPIRLAEFGNVHRYEPSGALHGLMRVRGFTQDDAHIFCTDEQMAAECLKINDLILSVYKDFGFDEVTIKLSTRPDKRVGSDELWDRAESVMMGVLETIQQQSNNIKTGILPGEGAFYGPKFEYTLKDAIGREWQCGTTQVDFNLPERFGAFYIDSNSEKTQPVMIHRAICGSMERFLGILIENFAGHMPLWVSPLQVVVATITSEADAYGLEVAEALREAGLNVETDFRNEKINYKIREHSVTKVPVIIVCGRKEAEERTVNIRRLGSQDQVSMGLDAAVESLALEATPPDIRRKAEARKAKAA.

One can recognise a TGS domain in the interval 1-64 (MSQAISLTFP…TTGRIEIITR (64 aa)). Residues 245-546 (DHRRLGREMD…LIENFAGHMP (302 aa)) are catalytic. Cysteine 341, histidine 392, and histidine 523 together coordinate Zn(2+).

This sequence belongs to the class-II aminoacyl-tRNA synthetase family. As to quaternary structure, homodimer. It depends on Zn(2+) as a cofactor.

Its subcellular location is the cytoplasm. The enzyme catalyses tRNA(Thr) + L-threonine + ATP = L-threonyl-tRNA(Thr) + AMP + diphosphate + H(+). Catalyzes the attachment of threonine to tRNA(Thr) in a two-step reaction: L-threonine is first activated by ATP to form Thr-AMP and then transferred to the acceptor end of tRNA(Thr). Also edits incorrectly charged L-seryl-tRNA(Thr). This is Threonine--tRNA ligase from Rhizobium johnstonii (strain DSM 114642 / LMG 32736 / 3841) (Rhizobium leguminosarum bv. viciae).